Consider the following 355-residue polypeptide: Phosphoribosylformylglycinamidine cyclo-ligase (355 aa).

This sequence belongs to the AIR synthase family.

It localises to the cytoplasm. It carries out the reaction 2-formamido-N(1)-(5-O-phospho-beta-D-ribosyl)acetamidine + ATP = 5-amino-1-(5-phospho-beta-D-ribosyl)imidazole + ADP + phosphate + H(+). It participates in purine metabolism; IMP biosynthesis via de novo pathway; 5-amino-1-(5-phospho-D-ribosyl)imidazole from N(2)-formyl-N(1)-(5-phospho-D-ribosyl)glycinamide: step 2/2. This chain is Phosphoribosylformylglycinamidine cyclo-ligase, found in Paraburkholderia xenovorans (strain LB400).